We begin with the raw amino-acid sequence, 763 residues long: Putative alpha-1,3-mannosyltransferase MNN15 (763 aa).

Residues 1 to 7 (MRFTLKK) are Cytoplasmic-facing. A helical transmembrane segment spans residues 8–28 (IFFVFLTLLIISIGYLLLQSV). The Lumenal segment spans residues 29 to 763 (DLQRIRELLH…KDATTVRLRI (735 aa)). Residues N71, N157, and N169 are each glycosylated (N-linked (GlcNAc...) asparagine). Positions 617–659 (LVPPDLPNQREPGSPPDTKPEMEFRKSWKSRKKDTDEINEKLP) are disordered. A compositionally biased stretch (basic and acidic residues) spans 649–659 (KDTDEINEKLP).

The protein belongs to the MNN1/MNT family.

The protein resides in the golgi apparatus membrane. The protein operates within protein modification; protein glycosylation. Its function is as follows. Responsible for addition of the terminal mannose residues to the outer chain of core N-linked polysaccharides and to O-linked mannotriose. Implicated in late Golgi modifications. In Candida albicans (strain SC5314 / ATCC MYA-2876) (Yeast), this protein is Putative alpha-1,3-mannosyltransferase MNN15 (MNN15).